Here is a 216-residue protein sequence, read N- to C-terminus: Adenylate kinase (216 aa).

Residue 10-15 participates in ATP binding; it reads GAGKGT. The tract at residues 30 to 59 is NMP; that stretch reads STGDIFRKNISENTPLGIEAKSYMDNGQLV. Residues threonine 31, arginine 36, 57–59, 85–88, and glutamine 92 each bind AMP; these read QLV and GFPR. The interval 126–163 is LID; the sequence is GRRVCPSCGASYHIKFNPPTNDGKCDLCGSDVIQRKDD. Arginine 127 lines the ATP pocket. The Zn(2+) site is built by cysteine 130 and cysteine 133. 136 to 137 provides a ligand contact to ATP; that stretch reads SY. Cysteine 150 and cysteine 153 together coordinate Zn(2+). Arginine 160 and arginine 171 together coordinate AMP. Glutamine 199 is an ATP binding site.

The protein belongs to the adenylate kinase family. In terms of assembly, monomer.

The protein resides in the cytoplasm. It carries out the reaction AMP + ATP = 2 ADP. It functions in the pathway purine metabolism; AMP biosynthesis via salvage pathway; AMP from ADP: step 1/1. Catalyzes the reversible transfer of the terminal phosphate group between ATP and AMP. Plays an important role in cellular energy homeostasis and in adenine nucleotide metabolism. The polypeptide is Adenylate kinase (Clostridium perfringens (strain ATCC 13124 / DSM 756 / JCM 1290 / NCIMB 6125 / NCTC 8237 / Type A)).